The sequence spans 522 residues: Amine oxidase [flavin-containing] (522 aa).

At 1-492 (MTAQNTFDVI…FWERNLPSVG (492 aa)) the chain is on the cytoplasmic side. Cysteine 399 carries the post-translational modification S-8alpha-FAD cysteine. The chain crosses the membrane as a helical; Anchor for type IV membrane protein span at residues 493 to 513 (GFINFLAASVLSVATAAGMLA). The Mitochondrial intermembrane segment spans residues 514 to 522 (YQKGLLTRS).

It belongs to the flavin monoamine oxidase family. FAD serves as cofactor.

The protein resides in the mitochondrion outer membrane. The catalysed reaction is a secondary aliphatic amine + O2 + H2O = a primary amine + an aldehyde + H2O2. Its function is as follows. Catalyzes the oxidative deamination of biogenic and xenobiotic amines and has important functions in the metabolism of neuroactive and vasoactive amines in the central nervous system and peripheral tissues. Oxidizes both 5-hydroxytryptamine (5-HT) and beta-phenylethylamine (PEA). This Oncorhynchus mykiss (Rainbow trout) protein is Amine oxidase [flavin-containing] (mao).